The chain runs to 593 residues: Glutamate decarboxylase 1 (593 aa).

Low complexity predominate over residues 1–12; it reads MASSTPSPATSS. Residues 1–22 are disordered; that stretch reads MASSTPSPATSSNAGADPNTTN. Ser-77 bears the Phosphoserine mark. 189–191 is a binding site for 4-aminobutanoate; it reads QLS. Lys-404 carries the N6-(pyridoxal phosphate)lysine modification. Arg-566 is a 4-aminobutanoate binding site.

It belongs to the group II decarboxylase family. Homodimer. Pyridoxal 5'-phosphate serves as cofactor.

The enzyme catalyses L-glutamate + H(+) = 4-aminobutanoate + CO2. In terms of biological role, catalyzes the synthesis of the inhibitory neurotransmitter gamma-aminobutyric acid (GABA) with pyridoxal 5'-phosphate as cofactor. The polypeptide is Glutamate decarboxylase 1 (Gad1) (Mus musculus (Mouse)).